The chain runs to 151 residues: Flagellar assembly factor FliW (151 aa).

It belongs to the FliW family. In terms of assembly, interacts with translational regulator CsrA and flagellin(s).

It localises to the cytoplasm. Acts as an anti-CsrA protein, binds CsrA and prevents it from repressing translation of its target genes, one of which is flagellin. Binds to flagellin and participates in the assembly of the flagellum. In Natranaerobius thermophilus (strain ATCC BAA-1301 / DSM 18059 / JW/NM-WN-LF), this protein is Flagellar assembly factor FliW.